The primary structure comprises 613 residues: Forkhead box protein O (613 aa).

Disordered stretches follow at residues 39-90, 182-205, 217-269, and 317-360; these read RARS…KNSS, KSVRRRAASMETSRYEKRRGRAKK, GLND…RLSP, and QGFS…PASG. A Phosphothreonine; by PKB/AKT1 modification is found at threonine 44. Polar residues predominate over residues 63–80; it reads TKASNQQLAPGDSQQAIQ. Position 75 is a phosphoserine (serine 75). The segment covering 81–90 has biased composition (low complexity); it reads NANAAKKNSS. A DNA-binding region (fork-head) is located at residues 95-201; sequence WGNLSYADLI…ETSRYEKRRG (107 aa). Serine 190 is subject to Phosphoserine; by PKB/AKT1. Composition is skewed to polar residues over residues 221-230 and 256-265; these read ATPSPSSSVS and RASSNASSCG. Serine 259 carries the phosphoserine; by PKB/AKT1 modification. Phosphoserine is present on residues serine 262, serine 263, and serine 268. A compositionally biased stretch (pro residues) spans 327–336; that stretch reads SQPPPPPYQP. The segment covering 337–353 has biased composition (low complexity); the sequence is PQHQQAQQQQQQQSPYA.

Interacts with melt.

It is found in the cytoplasm. It localises to the nucleus. Transcription factor involved in the regulation of the insulin signaling pathway. Consistently activates both the downstream target Thor\d4EBP and the feedback control target InR. Involved in negative regulation of the cell cycle, modulating cell growth and proliferation. In response to cellular stresses, such as nutrient deprivation or increased levels of reactive oxygen species, foxo is activated and inhibits growth through the action of target genes such as Thor. Foxo activated in the adult fat body can regulate lifespan in adults; an insulin peptide itself may function as one secondary messenger of insulin-regulated aging. Also regulates Lip4, homolog of human acid lipases, thereby acting as a key modulator of lipid metabolism by insulin signaling and integrates insulin responses to glucose and lipid homeostasis. In Drosophila melanogaster (Fruit fly), this protein is Forkhead box protein O.